The sequence spans 140 residues: Hemoglobin subunit alpha (140 aa).

The Globin domain occupies 1-140 (LSAADKGHVK…VSTVLTSKYR (140 aa)). Position 2 is a phosphoserine (serine 2). An N6-succinyllysine mark is found at lysine 6 and lysine 10. N6-acetyllysine; alternate is present on lysine 15. Lysine 15 carries the post-translational modification N6-succinyllysine; alternate. Residue tyrosine 23 is modified to Phosphotyrosine. Serine 34 bears the Phosphoserine mark. At lysine 39 the chain carries N6-succinyllysine. Residue serine 48 is modified to Phosphoserine. Histidine 57 provides a ligand contact to O2. Residue histidine 86 coordinates heme b. At serine 101 the chain carries Phosphoserine. The residue at position 107 (threonine 107) is a Phosphothreonine. Serine 123 is modified (phosphoserine). A phosphothreonine mark is found at threonine 133 and threonine 136. The residue at position 137 (serine 137) is a Phosphoserine.

This sequence belongs to the globin family. In terms of assembly, heterotetramer of two alpha chains and two beta chains. Red blood cells.

Involved in oxygen transport from the lung to the various peripheral tissues. Its function is as follows. Hemopressin acts as an antagonist peptide of the cannabinoid receptor CNR1. Hemopressin-binding efficiently blocks cannabinoid receptor CNR1 and subsequent signaling. The chain is Hemoglobin subunit alpha (HBA) from Tragelaphus strepsiceros (Greater kudu).